The chain runs to 192 residues: Fe/S biogenesis protein NfuA (192 aa).

[4Fe-4S] cluster is bound by residues Cys-149 and Cys-152.

It belongs to the NfuA family. As to quaternary structure, homodimer. The cofactor is [4Fe-4S] cluster.

In terms of biological role, involved in iron-sulfur cluster biogenesis. Binds a 4Fe-4S cluster, can transfer this cluster to apoproteins, and thereby intervenes in the maturation of Fe/S proteins. Could also act as a scaffold/chaperone for damaged Fe/S proteins. In Shewanella loihica (strain ATCC BAA-1088 / PV-4), this protein is Fe/S biogenesis protein NfuA.